Here is a 247-residue protein sequence, read N- to C-terminus: 5'-nucleotidase SurE (247 aa).

A divalent metal cation-binding residues include aspartate 8, aspartate 9, serine 39, and asparagine 91.

It belongs to the SurE nucleotidase family. A divalent metal cation serves as cofactor.

Its subcellular location is the cytoplasm. The enzyme catalyses a ribonucleoside 5'-phosphate + H2O = a ribonucleoside + phosphate. Its function is as follows. Nucleotidase that shows phosphatase activity on nucleoside 5'-monophosphates. This Aromatoleum aromaticum (strain DSM 19018 / LMG 30748 / EbN1) (Azoarcus sp. (strain EbN1)) protein is 5'-nucleotidase SurE.